The chain runs to 283 residues: Elongation factor Ts (283 aa).

The involved in Mg(2+) ion dislocation from EF-Tu stretch occupies residues 79–82 (TDFV).

This sequence belongs to the EF-Ts family.

The protein resides in the cytoplasm. Its function is as follows. Associates with the EF-Tu.GDP complex and induces the exchange of GDP to GTP. It remains bound to the aminoacyl-tRNA.EF-Tu.GTP complex up to the GTP hydrolysis stage on the ribosome. The polypeptide is Elongation factor Ts (Shewanella baltica (strain OS155 / ATCC BAA-1091)).